A 425-amino-acid polypeptide reads, in one-letter code: Enolase (425 aa).

(2R)-2-phosphoglycerate is bound at residue Gln162. Glu204 (proton donor) is an active-site residue. The Mg(2+) site is built by Asp241, Glu284, and Asp311. The (2R)-2-phosphoglycerate site is built by Lys336, Arg365, Ser366, and Lys387. The active-site Proton acceptor is the Lys336.

This sequence belongs to the enolase family. Mg(2+) serves as cofactor.

It is found in the cytoplasm. It localises to the secreted. Its subcellular location is the cell surface. It carries out the reaction (2R)-2-phosphoglycerate = phosphoenolpyruvate + H2O. Its pathway is carbohydrate degradation; glycolysis; pyruvate from D-glyceraldehyde 3-phosphate: step 4/5. Functionally, catalyzes the reversible conversion of 2-phosphoglycerate (2-PG) into phosphoenolpyruvate (PEP). It is essential for the degradation of carbohydrates via glycolysis. This chain is Enolase, found in Brucella anthropi (strain ATCC 49188 / DSM 6882 / CCUG 24695 / JCM 21032 / LMG 3331 / NBRC 15819 / NCTC 12168 / Alc 37) (Ochrobactrum anthropi).